A 304-amino-acid polypeptide reads, in one-letter code: ATP phosphoribosyltransferase (304 aa).

It belongs to the ATP phosphoribosyltransferase family. Long subfamily. Mg(2+) is required as a cofactor.

The protein resides in the cytoplasm. It carries out the reaction 1-(5-phospho-beta-D-ribosyl)-ATP + diphosphate = 5-phospho-alpha-D-ribose 1-diphosphate + ATP. It participates in amino-acid biosynthesis; L-histidine biosynthesis; L-histidine from 5-phospho-alpha-D-ribose 1-diphosphate: step 1/9. Its activity is regulated as follows. Feedback inhibited by histidine. Catalyzes the condensation of ATP and 5-phosphoribose 1-diphosphate to form N'-(5'-phosphoribosyl)-ATP (PR-ATP). Has a crucial role in the pathway because the rate of histidine biosynthesis seems to be controlled primarily by regulation of HisG enzymatic activity. The chain is ATP phosphoribosyltransferase from Xylella fastidiosa (strain M12).